The primary structure comprises 422 residues: Probable glucuronosyltransferase Os01g0926400 (422 aa).

Residues 1 to 8 (MGTRPCAG) lie on the Cytoplasmic side of the membrane. A helical; Signal-anchor for type II membrane protein membrane pass occupies residues 9 to 29 (VASAVAAAVAVLLLAVSCFAA). At 30-422 (AATTTQKHGR…QGLENDLKPW (393 aa)) the chain is on the lumenal side. Asparagine 149 is a glycosylation site (N-linked (GlcNAc...) asparagine).

Belongs to the glycosyltransferase 47 family.

It localises to the golgi apparatus membrane. Its function is as follows. Involved in the synthesis of glucuronoxylan hemicellulose in secondary cell walls. The protein is Probable glucuronosyltransferase Os01g0926400 of Oryza sativa subsp. japonica (Rice).